A 71-amino-acid chain; its full sequence is Conotoxin ba5b (71 aa).

An N-terminal signal peptide occupies residues 1 to 19 (MLCLPVFITLLLLVSPSAA). A propeptide spanning residues 20–52 (LPVESELQRDLTQDSPKDFRIREPLLLSKMFDR) is cleaved from the precursor. Disulfide bonds link Cys-54-Cys-63 and Cys-55-Cys-64. Cys-64 carries the post-translational modification Cysteine amide. A propeptide spanning residues 66-71 (RYQRGS) is cleaved from the precursor.

It belongs to the conotoxin T superfamily. In terms of tissue distribution, expressed by the venom duct.

The protein localises to the secreted. This Conus bayani (Bayan's cone) protein is Conotoxin ba5b.